A 703-amino-acid chain; its full sequence is Elongation factor G 1 (703 aa).

The 283-residue stretch at 8-290 (ERYRNIGISA…AVIDFLPSPV (283 aa)) folds into the tr-type G domain. GTP contacts are provided by residues 17–24 (AHIDAGKT), 88–92 (DTPGH), and 142–145 (NKMD).

Belongs to the TRAFAC class translation factor GTPase superfamily. Classic translation factor GTPase family. EF-G/EF-2 subfamily.

It is found in the cytoplasm. Functionally, catalyzes the GTP-dependent ribosomal translocation step during translation elongation. During this step, the ribosome changes from the pre-translocational (PRE) to the post-translocational (POST) state as the newly formed A-site-bound peptidyl-tRNA and P-site-bound deacylated tRNA move to the P and E sites, respectively. Catalyzes the coordinated movement of the two tRNA molecules, the mRNA and conformational changes in the ribosome. This chain is Elongation factor G 1, found in Ralstonia nicotianae (strain ATCC BAA-1114 / GMI1000) (Ralstonia solanacearum).